The chain runs to 281 residues: 2-dehydro-3-deoxyphosphooctonate aldolase (281 aa).

It belongs to the KdsA family.

The protein localises to the cytoplasm. The enzyme catalyses D-arabinose 5-phosphate + phosphoenolpyruvate + H2O = 3-deoxy-alpha-D-manno-2-octulosonate-8-phosphate + phosphate. The protein operates within carbohydrate biosynthesis; 3-deoxy-D-manno-octulosonate biosynthesis; 3-deoxy-D-manno-octulosonate from D-ribulose 5-phosphate: step 2/3. It functions in the pathway bacterial outer membrane biogenesis; lipopolysaccharide biosynthesis. The chain is 2-dehydro-3-deoxyphosphooctonate aldolase from Hahella chejuensis (strain KCTC 2396).